A 260-amino-acid chain; its full sequence is uncharacterized protein (260 aa).

A Radical SAM core domain is found at 6–239 (AGVRSGVVVS…VAVAETYLPN (234 aa)).

This is an uncharacterized protein from Sinorhizobium fredii (strain NBRC 101917 / NGR234).